The chain runs to 356 residues: Nuclear hormone receptor family member nhr-169 (356 aa).

Positions 16 to 90 (DPICSVCNFS…AGMKRSLVKE (75 aa)) form a DNA-binding region, nuclear receptor. 2 consecutive NR C4-type zinc fingers follow at residues 19-40 (CSVC…CSAC) and 56-72 (CKKD…CRAC). An NR LBD domain is found at 144-356 (DVSKILKTTP…KLYLHMGLPF (213 aa)).

This sequence belongs to the nuclear hormone receptor family.

The protein localises to the nucleus. In terms of biological role, orphan nuclear receptor. The sequence is that of Nuclear hormone receptor family member nhr-169 (nhr-169) from Caenorhabditis elegans.